We begin with the raw amino-acid sequence, 179 residues long: UPF0227 protein SO_2251 (179 aa).

Belongs to the UPF0227 family.

The protein is UPF0227 protein SO_2251 of Shewanella oneidensis (strain ATCC 700550 / JCM 31522 / CIP 106686 / LMG 19005 / NCIMB 14063 / MR-1).